The chain runs to 1087 residues: A-kinase anchor protein 9 (1087 aa).

The stretch at 5-461 (EVQCQAEKVR…REREKMERIQ (457 aa)) forms a coiled coil. Residues 559–572 (SLQKVLEEKVAAAL) form a PKA-RII subunit binding domain region. Positions 614 to 773 (MESDVSALTW…SEKEDKTEVQ (160 aa)) form a coiled coil. Residues 667-685 (VQDSETKQRERERQSRLHG) are compositionally biased toward basic and acidic residues. Positions 667–691 (VQDSETKQRERERQSRLHGDLGVLE) are disordered.

In terms of assembly, interacts with the regulatory region of protein kinase N (PKN), protein phosphatase 2A (PP2A), protein phosphatase 1 (PP1) and the immature non-phosphorylated form of PKC epsilon. Interacts with CIP4 and FNBP1. Interacts with chloride intracellular channel proteins CLIC1, CLIC4 and CLIC5. CSNK1D binding promotes its centrosomal subcellular location. Interacts with GM130/GOLGA2; leading to recruitment to the Golgi apparatus. Interacts with KCNQ1; targets protein kinase A (PKA) catalytic and regulatory subunits and protein phosphatase 1 (PP1), to the heterodimer KCNQ1-KCNE1. Interacts with PDE4DIP; this interaction stabilizes both proteins. In complex with PDE4DIP, recruits CAMSAP2 to the Golgi apparatus. Forms a pericentrosomal complex with CDK5RAP2, EB1/MAPRE1 and PDE4DIP; within this complex, MAPRE1 binding to CDK5RAP2 may be mediated by PDE4DIP. The interaction with PDE4DIP is isoform-specific. Interacts with MAPRE1 and MAPRE3. Interacts (via C-terminus) with CAMSAP2; this interaction is much stronger in the presence of PDE4DIP. Interacts with CAMSAP3. Interacts (via C-terminus) with the gamma-tubulin ring complex (gamma-TuRC), composed of gamma-tubulin, TUBGCP2, TUBGCP3, TUBGCP4, TUBGCP5 and TUBGCP6. In terms of tissue distribution, highly expressed in gastric parietal cells.

It localises to the golgi apparatus. The protein resides in the cytoplasm. It is found in the cytoskeleton. Its subcellular location is the microtubule organizing center. The protein localises to the centrosome. In terms of biological role, scaffolding protein that assembles several protein kinases and phosphatases on the centrosome and Golgi apparatus. Required to maintain the integrity of the Golgi apparatus. Required for microtubule nucleation at the cis-side of the Golgi apparatus. Required for association of the centrosomes with the poles of the bipolar mitotic spindle during metaphase. In complex with PDE4DIP, recruits CAMSAP2 to the Golgi apparatus and tethers non-centrosomal minus-end microtubules to the Golgi, an important step for polarized cell movement. In complex with PDE4DIP, EB1/MAPRE1 and CDK5RAP2, contributes to microtubules nucleation and extension also from the centrosome to the cell periphery. The interaction with PDE4DIP is isoform-specific. This chain is A-kinase anchor protein 9 (AKAP9), found in Oryctolagus cuniculus (Rabbit).